Consider the following 148-residue polypeptide: UPF0260 protein Sfri_1740 (148 aa).

It belongs to the UPF0260 family.

This is UPF0260 protein Sfri_1740 from Shewanella frigidimarina (strain NCIMB 400).